Consider the following 153-residue polypeptide: Putative pre-16S rRNA nuclease (153 aa).

This sequence belongs to the YqgF nuclease family.

The protein localises to the cytoplasm. In terms of biological role, could be a nuclease involved in processing of the 5'-end of pre-16S rRNA. The chain is Putative pre-16S rRNA nuclease from Prochlorococcus marinus (strain MIT 9301).